The primary structure comprises 329 residues: Fructose-1,6-bisphosphatase class 1 (329 aa).

Residues E84, D103, L105, and D106 each coordinate Mg(2+). Residues 106-109, N196, and K262 each bind substrate; that span reads DGSS. E268 serves as a coordination point for Mg(2+).

It belongs to the FBPase class 1 family. Homotetramer. Mg(2+) serves as cofactor.

It is found in the cytoplasm. It carries out the reaction beta-D-fructose 1,6-bisphosphate + H2O = beta-D-fructose 6-phosphate + phosphate. Its pathway is carbohydrate biosynthesis; gluconeogenesis. In Shewanella pealeana (strain ATCC 700345 / ANG-SQ1), this protein is Fructose-1,6-bisphosphatase class 1.